Consider the following 206-residue polypeptide: Testis-expressed protein 38 (206 aa).

The helical transmembrane segment at 15–35 threads the bilayer; that stretch reads VSLYFGILGLCSVITGGCIIF.

It localises to the membrane. In Homo sapiens (Human), this protein is Testis-expressed protein 38 (TEX38).